Here is a 155-residue protein sequence, read N- to C-terminus: Large ribosomal subunit protein uL30 (155 aa).

The protein belongs to the universal ribosomal protein uL30 family. As to quaternary structure, part of the 50S ribosomal subunit.

This Pyrococcus abyssi (strain GE5 / Orsay) protein is Large ribosomal subunit protein uL30.